We begin with the raw amino-acid sequence, 174 residues long: Endoribonuclease YbeY (174 aa).

Positions 129, 133, and 139 each coordinate Zn(2+).

This sequence belongs to the endoribonuclease YbeY family. Zn(2+) is required as a cofactor.

It localises to the cytoplasm. In terms of biological role, single strand-specific metallo-endoribonuclease involved in late-stage 70S ribosome quality control and in maturation of the 3' terminus of the 16S rRNA. The protein is Endoribonuclease YbeY of Lactobacillus delbrueckii subsp. bulgaricus (strain ATCC 11842 / DSM 20081 / BCRC 10696 / JCM 1002 / NBRC 13953 / NCIMB 11778 / NCTC 12712 / WDCM 00102 / Lb 14).